Consider the following 393-residue polypeptide: RNA pseudouridine synthase 7 (393 aa).

Residues 49-118 form the S4 RNA-binding domain; that stretch reads KTIVDLFTDE…GDITILQNEA (70 aa). Aspartate 162 is an active-site residue.

Belongs to the pseudouridine synthase RluA family.

The catalysed reaction is a uridine in RNA = a pseudouridine in RNA. This is RNA pseudouridine synthase 7 from Oryza sativa subsp. japonica (Rice).